Reading from the N-terminus, the 244-residue chain is Adenosine 5'-phosphosulfate reductase (244 aa).

Residues C129, C130, C212, and C215 each coordinate [4Fe-4S] cluster. The active-site Nucleophile; cysteine thiosulfonate intermediate is C240.

It belongs to the PAPS reductase family. CysH subfamily. The cofactor is [4Fe-4S] cluster.

The protein localises to the cytoplasm. It carries out the reaction [thioredoxin]-disulfide + sulfite + AMP + 2 H(+) = adenosine 5'-phosphosulfate + [thioredoxin]-dithiol. It functions in the pathway sulfur metabolism; hydrogen sulfide biosynthesis; sulfite from sulfate. Its function is as follows. Catalyzes the formation of sulfite from adenosine 5'-phosphosulfate (APS) using thioredoxin as an electron donor. This chain is Adenosine 5'-phosphosulfate reductase, found in Neisseria meningitidis serogroup A / serotype 4A (strain DSM 15465 / Z2491).